The following is a 543-amino-acid chain: Malate synthase (543 aa).

The active-site Proton acceptor is arginine 162. The active-site Proton donor is the aspartate 449.

Belongs to the malate synthase family.

It carries out the reaction glyoxylate + acetyl-CoA + H2O = (S)-malate + CoA + H(+). Its pathway is carbohydrate metabolism; glyoxylate cycle; (S)-malate from isocitrate: step 2/2. The polypeptide is Malate synthase (masA) (Dictyostelium discoideum (Social amoeba)).